We begin with the raw amino-acid sequence, 842 residues long: Envelope glycoprotein H (842 aa).

The N-terminal stretch at 1–20 (MRRPLCAALLAAAVLALAAG) is a signal peptide. At 21 to 802 (APAAARGGAG…AGHEAPTFSP (782 aa)) the chain is on the virion surface side. Asparagine 77 and asparagine 112 each carry an N-linked (GlcNAc...) asparagine; by host glycan. Residues 240–303 (ERAAARLAVG…AAGPQRRAYV (64 aa)) are interaction with gL. Asparagine 617, asparagine 666, asparagine 760, and asparagine 783 each carry an N-linked (GlcNAc...) asparagine; by host glycan. A helical transmembrane segment spans residues 803 to 823 (AYVWASVGGALVAGTTIYAIA). Topologically, residues 824–842 (KMLCSSVPLARGYSSVPVF) are intravirion.

Belongs to the herpesviridae glycoprotein H family. In terms of assembly, interacts with glycoprotein L (gL); this interaction is necessary for the correct processing and cell surface expression of gH. The heterodimer gH/gL seems to interact with gB trimers during fusion. N-glycosylated, O-glycosylated, and sialylated.

The protein resides in the virion membrane. The protein localises to the host cell membrane. It is found in the host endosome membrane. In terms of biological role, the heterodimer glycoprotein H-glycoprotein L is required for the fusion of viral and plasma membranes leading to virus entry into the host cell. Following initial binding to host receptor, membrane fusion is mediated by the fusion machinery composed of gB and the heterodimer gH/gL. May also be involved in the fusion between the virion envelope and the outer nuclear membrane during virion morphogenesis. The chain is Envelope glycoprotein H from Bos taurus (Bovine).